We begin with the raw amino-acid sequence, 212 residues long: Deoxyribose-phosphate aldolase (212 aa).

Aspartate 89 serves as the catalytic Proton donor/acceptor. The active-site Schiff-base intermediate with acetaldehyde is the lysine 151. Lysine 180 (proton donor/acceptor) is an active-site residue.

The protein belongs to the DeoC/FbaB aldolase family. DeoC type 1 subfamily.

The protein localises to the cytoplasm. It catalyses the reaction 2-deoxy-D-ribose 5-phosphate = D-glyceraldehyde 3-phosphate + acetaldehyde. It functions in the pathway carbohydrate degradation; 2-deoxy-D-ribose 1-phosphate degradation; D-glyceraldehyde 3-phosphate and acetaldehyde from 2-deoxy-alpha-D-ribose 1-phosphate: step 2/2. Catalyzes a reversible aldol reaction between acetaldehyde and D-glyceraldehyde 3-phosphate to generate 2-deoxy-D-ribose 5-phosphate. This Clostridium botulinum (strain 657 / Type Ba4) protein is Deoxyribose-phosphate aldolase.